We begin with the raw amino-acid sequence, 131 residues long: Large-conductance mechanosensitive channel (131 aa).

The next 3 membrane-spanning stretches (helical) occupy residues 14 to 34 (IMDL…VTSL), 38 to 58 (IIMP…LAVT), and 67 to 87 (GSFI…FIVI).

Belongs to the MscL family. In terms of assembly, homopentamer.

The protein resides in the cell membrane. Channel that opens in response to stretch forces in the membrane lipid bilayer. May participate in the regulation of osmotic pressure changes within the cell. This is Large-conductance mechanosensitive channel from Bacillus velezensis (strain DSM 23117 / BGSC 10A6 / LMG 26770 / FZB42) (Bacillus amyloliquefaciens subsp. plantarum).